The chain runs to 427 residues: Putative F-box protein At3g44060 (427 aa).

In terms of domain architecture, F-box spans 1 to 46; the sequence is MDCLPDDLLVQILYLLPTKEAVSTSVLSKRWRTLFTRSDNLDFHDP.

This is Putative F-box protein At3g44060 from Arabidopsis thaliana (Mouse-ear cress).